Reading from the N-terminus, the 832-residue chain is Cadherin-17 (832 aa).

The first 22 residues, 1–22 (MILQAHLHSLCLLMLYLATGYG), serve as a signal peptide directing secretion. Over 23–787 (QEGKFSGPLK…HQTGIPTVGM (765 aa)) the chain is Extracellular. Cadherin domains lie at 30 to 128 (PLKP…TFLQ), 129 to 244 (SKYE…APKP), 245 to 340 (VEMV…PPTC), 341 to 449 (PSPV…IPIF), 450 to 566 (EKSD…APQF), 567 to 667 (SQHV…PPRL), and 668 to 777 (AKDY…RPAG). 8 N-linked (GlcNAc...) asparagine glycosylation sites follow: Asn149, Asn184, Asn250, Asn419, Asn456, Asn546, Asn587, and Asn722. The chain crosses the membrane as a helical span at residues 788–808 (AVGILLTTLLVIGIILAVVFI). The Cytoplasmic portion of the chain corresponds to 809–832 (RIKKDKGKDNVESAQASEVKPLRS).

As to expression, expressed in the gastrointestinal tract and pancreatic duct. Not detected in kidney, lung, liver, brain, adrenal gland and skin.

The protein resides in the cell membrane. Cadherins are calcium-dependent cell adhesion proteins. They preferentially interact with themselves in a homophilic manner in connecting cells; cadherins may thus contribute to the sorting of heterogeneous cell types. LI-cadherin may have a role in the morphological organization of liver and intestine. Involved in intestinal peptide transport. This is Cadherin-17 (CDH17) from Homo sapiens (Human).